The primary structure comprises 393 residues: MKRPVTGKDLMIVNMGPHHPSMHGVLRLIVTLDGEDVVDCEPILGYLHRGMEKIAENRAIIQYLPYVTRWDYLATMFTEAITVNGPEQLGNIQVPKRASYIRVIMLELSRIASHLLWLGPFMADIGAQTPFFYIFREREFVYDLFEAATGMRMMHNFFRIGGIAADLPYGWIDKCLDFCDYFLTEVVEYQKLITRNPIFLERVEGVGIIGGEEAINWGLSGPMLRASGIPWDLRKVDRYESYDEFEWDIQWQKQGDSLARYLVRLNEMTESIKIIQQALEGLPGGPYENLESRGFDRKRNPEWNDFEYRFISKKPSPTFELSKQELYVRVEAPKGELGIFLIGDQSGFPWRWKIRPPGFINLQILPELVKRMKLADIMTILGSIDIIMGEVDR.

Belongs to the complex I 49 kDa subunit family. In terms of assembly, NDH is composed of at least 16 different subunits, 5 of which are encoded in the nucleus.

Its subcellular location is the plastid. It localises to the chloroplast thylakoid membrane. The enzyme catalyses a plastoquinone + NADH + (n+1) H(+)(in) = a plastoquinol + NAD(+) + n H(+)(out). The catalysed reaction is a plastoquinone + NADPH + (n+1) H(+)(in) = a plastoquinol + NADP(+) + n H(+)(out). Its function is as follows. NDH shuttles electrons from NAD(P)H:plastoquinone, via FMN and iron-sulfur (Fe-S) centers, to quinones in the photosynthetic chain and possibly in a chloroplast respiratory chain. The immediate electron acceptor for the enzyme in this species is believed to be plastoquinone. Couples the redox reaction to proton translocation, and thus conserves the redox energy in a proton gradient. The chain is NAD(P)H-quinone oxidoreductase subunit H, chloroplastic from Olimarabidopsis pumila (Dwarf rocket).